Reading from the N-terminus, the 312-residue chain is Golgi to ER traffic protein 2 (312 aa).

Residues 1–175 (MSDSPSISAE…VQYNTYRHQV (175 aa)) lie on the Cytoplasmic side of the membrane. A helical membrane pass occupies residues 176-196 (WKFRFLAVRYFALLANFIYHF). Residues 197–224 (YIIGDSISFASSSHQFIRELIPVEPARS) lie on the Lumenal side of the membrane. Residues 225 to 244 (FFTLFSTIEVVIIASYYFLG) traverse the membrane as a helical segment. At 245-288 (TKEGFFSTATSNNFVVKLLDMGSMVLPQLQQFKTIAVRLLGYYE) the chain is on the cytoplasmic side. A helical transmembrane segment spans residues 289–309 (LLAVLLGDLSLVVVLFGLHSV). At 310 to 312 (LGN) the chain is on the lumenal side.

This sequence belongs to the GET2 family. In terms of assembly, component of the Golgi to ER traffic (GET) complex, which is composed of GET1, GET2 and GET3. Within the complex, GET1 and GET2 form a heterotetramer which is stabilized by phosphatidylinositol binding and which binds to the GET3 homodimer.

It is found in the endoplasmic reticulum membrane. The protein resides in the golgi apparatus membrane. In terms of biological role, required for the post-translational delivery of tail-anchored (TA) proteins to the endoplasmic reticulum. Together with GET1, acts as a membrane receptor for soluble GET3, which recognizes and selectively binds the transmembrane domain of TA proteins in the cytosol. The GET complex cooperates with the HDEL receptor ERD2 to mediate the ATP-dependent retrieval of resident ER proteins that contain a C-terminal H-D-E-L retention signal from the Golgi to the ER. In Scheffersomyces stipitis (strain ATCC 58785 / CBS 6054 / NBRC 10063 / NRRL Y-11545) (Yeast), this protein is Golgi to ER traffic protein 2.